The chain runs to 364 residues: UDP-N-acetylglucosamine--N-acetylmuramyl-(pentapeptide) pyrophosphoryl-undecaprenol N-acetylglucosamine transferase (364 aa).

UDP-N-acetyl-alpha-D-glucosamine-binding positions include 10–12 (TGG), N124, R165, S193, I248, and Q293.

This sequence belongs to the glycosyltransferase 28 family. MurG subfamily.

The protein resides in the cell inner membrane. The catalysed reaction is di-trans,octa-cis-undecaprenyl diphospho-N-acetyl-alpha-D-muramoyl-L-alanyl-D-glutamyl-meso-2,6-diaminopimeloyl-D-alanyl-D-alanine + UDP-N-acetyl-alpha-D-glucosamine = di-trans,octa-cis-undecaprenyl diphospho-[N-acetyl-alpha-D-glucosaminyl-(1-&gt;4)]-N-acetyl-alpha-D-muramoyl-L-alanyl-D-glutamyl-meso-2,6-diaminopimeloyl-D-alanyl-D-alanine + UDP + H(+). Its pathway is cell wall biogenesis; peptidoglycan biosynthesis. Its function is as follows. Cell wall formation. Catalyzes the transfer of a GlcNAc subunit on undecaprenyl-pyrophosphoryl-MurNAc-pentapeptide (lipid intermediate I) to form undecaprenyl-pyrophosphoryl-MurNAc-(pentapeptide)GlcNAc (lipid intermediate II). In Geobacter metallireducens (strain ATCC 53774 / DSM 7210 / GS-15), this protein is UDP-N-acetylglucosamine--N-acetylmuramyl-(pentapeptide) pyrophosphoryl-undecaprenol N-acetylglucosamine transferase.